We begin with the raw amino-acid sequence, 746 residues long: NAD(P)H-quinone oxidoreductase subunit 5, chloroplastic (746 aa).

The next 16 membrane-spanning stretches (helical) occupy residues 9–29 (WIIP…LLLF), 40–60 (WTFL…YLSI), 89–109 (IDPL…LVLI), 125–145 (FAYM…SNLI), 147–167 (VYFF…FWFT), 185–205 (GDFG…SFEF), 221–241 (VNLL…IAKS), 258–278 (TPIS…FLVA), 280–300 (LLPL…IGII), 327–347 (LGYM…FHLI), 354–374 (ALLF…VGYS), 396–416 (TAFL…CFWS), 425–445 (LLFS…TAFY), 547–567 (ILFP…IGIP), 608–628 (FSVS…KPFY), and 723–743 (YLFL…FFYF).

Belongs to the complex I subunit 5 family. NDH is composed of at least 16 different subunits, 5 of which are encoded in the nucleus.

It localises to the plastid. The protein resides in the chloroplast thylakoid membrane. The catalysed reaction is a plastoquinone + NADH + (n+1) H(+)(in) = a plastoquinol + NAD(+) + n H(+)(out). The enzyme catalyses a plastoquinone + NADPH + (n+1) H(+)(in) = a plastoquinol + NADP(+) + n H(+)(out). In terms of biological role, NDH shuttles electrons from NAD(P)H:plastoquinone, via FMN and iron-sulfur (Fe-S) centers, to quinones in the photosynthetic chain and possibly in a chloroplast respiratory chain. The immediate electron acceptor for the enzyme in this species is believed to be plastoquinone. Couples the redox reaction to proton translocation, and thus conserves the redox energy in a proton gradient. This chain is NAD(P)H-quinone oxidoreductase subunit 5, chloroplastic (ndhF), found in Olimarabidopsis pumila (Dwarf rocket).